The following is a 265-amino-acid chain: Phosphatidylserine decarboxylase proenzyme (265 aa).

Serine 183 functions as the Schiff-base intermediate with substrate; via pyruvic acid in the catalytic mechanism. At serine 183 the chain carries Pyruvic acid (Ser); by autocatalysis. The disordered stretch occupies residues 216 to 246; it reads TAPQTESEPESEPALQTAPVETAANPSAEQR.

Belongs to the phosphatidylserine decarboxylase family. PSD-A subfamily. In terms of assembly, heterodimer of a large membrane-associated beta subunit and a small pyruvoyl-containing alpha subunit. Requires pyruvate as cofactor. Is synthesized initially as an inactive proenzyme. Formation of the active enzyme involves a self-maturation process in which the active site pyruvoyl group is generated from an internal serine residue via an autocatalytic post-translational modification. Two non-identical subunits are generated from the proenzyme in this reaction, and the pyruvate is formed at the N-terminus of the alpha chain, which is derived from the carboxyl end of the proenzyme. The post-translation cleavage follows an unusual pathway, termed non-hydrolytic serinolysis, in which the side chain hydroxyl group of the serine supplies its oxygen atom to form the C-terminus of the beta chain, while the remainder of the serine residue undergoes an oxidative deamination to produce ammonia and the pyruvoyl prosthetic group on the alpha chain.

The protein resides in the cell membrane. The enzyme catalyses a 1,2-diacyl-sn-glycero-3-phospho-L-serine + H(+) = a 1,2-diacyl-sn-glycero-3-phosphoethanolamine + CO2. The protein operates within phospholipid metabolism; phosphatidylethanolamine biosynthesis; phosphatidylethanolamine from CDP-diacylglycerol: step 2/2. Its function is as follows. Catalyzes the formation of phosphatidylethanolamine (PtdEtn) from phosphatidylserine (PtdSer). This chain is Phosphatidylserine decarboxylase proenzyme, found in Neisseria meningitidis serogroup B (strain ATCC BAA-335 / MC58).